The following is a 372-amino-acid chain: Rab9 effector protein with kelch motifs (372 aa).

Kelch repeat units follow at residues 49–95 (KVFI…FIPS), 100–146 (SIWV…TSSA), 151–203 (QLYV…AAGT), 204–250 (KLFI…SAVA), and 254–303 (HLYV…IIPW). The interval 309-341 (SEKEDSNSATVNRDAEKGDSTEKGVTQGGDSQE) is disordered. Residues 321-330 (RDAEKGDSTE) are compositionally biased toward basic and acidic residues. The Kelch 6 repeat unit spans residues 349 to 372 (LCFVFGGMNTEGEIYDDCIVTAVD).

In terms of assembly, interacts with PIKFYVE; the interaction recruits RABEPK to the endosomal membrane. Interacts with RAB9 in its GTP-bound conformation. Post-translationally, phosphorylated on Ser residues by PIKFYVE.

It is found in the cytoplasm. It localises to the endosome membrane. Its function is as follows. Rab9 effector required for endosome to trans-Golgi network (TGN) transport. This Bos taurus (Bovine) protein is Rab9 effector protein with kelch motifs (RABEPK).